Reading from the N-terminus, the 1404-residue chain is DNA-directed RNA polymerase subunit beta' (1404 aa).

Cysteine 70, cysteine 72, cysteine 85, and cysteine 88 together coordinate Zn(2+). Positions 460, 462, and 464 each coordinate Mg(2+). Residues cysteine 814, cysteine 888, cysteine 895, and cysteine 898 each contribute to the Zn(2+) site.

Belongs to the RNA polymerase beta' chain family. As to quaternary structure, the RNAP catalytic core consists of 2 alpha, 1 beta, 1 beta' and 1 omega subunit. When a sigma factor is associated with the core the holoenzyme is formed, which can initiate transcription. The cofactor is Mg(2+). Requires Zn(2+) as cofactor.

It carries out the reaction RNA(n) + a ribonucleoside 5'-triphosphate = RNA(n+1) + diphosphate. Functionally, DNA-dependent RNA polymerase catalyzes the transcription of DNA into RNA using the four ribonucleoside triphosphates as substrates. In Shewanella halifaxensis (strain HAW-EB4), this protein is DNA-directed RNA polymerase subunit beta'.